A 252-amino-acid polypeptide reads, in one-letter code: NLP effector protein Pc118356 (252 aa).

The N-terminal stretch at 1-17 (MALTVLAATALTALIMG) is a signal peptide. N-linked (GlcNAc...) asparagine glycosylation is found at asparagine 20 and asparagine 67. The short motif at 121-127 (QDRHFWE) is the Hepta-peptide GHRHDWE motif element. Asparagine 166 is a glycosylation site (N-linked (GlcNAc...) asparagine).

This sequence belongs to the Necrosis inducing protein (NPP1) family.

The protein resides in the secreted. Functionally, secreted effector that contributes strongly to virulence during infection by P.capsici. This is NLP effector protein Pc118356 from Phytophthora capsici.